The chain runs to 147 residues: Protein-export protein SecB 2 (147 aa).

Belongs to the SecB family. As to quaternary structure, homotetramer, a dimer of dimers. One homotetramer interacts with 1 SecA dimer.

Its subcellular location is the cytoplasm. One of the proteins required for the normal export of preproteins out of the cell cytoplasm. It is a molecular chaperone that binds to a subset of precursor proteins, maintaining them in a translocation-competent state. It also specifically binds to its receptor SecA. This is Protein-export protein SecB 2 from Francisella tularensis subsp. holarctica (strain FTNF002-00 / FTA).